Reading from the N-terminus, the 136-residue chain is MGSETLSVIQVRLRNIYDNDKVALLKITCHTNRLILLTHTLAKSVIHTIKLSGIVFIHIITSSDYCPTSDIINSANFTSMPILQNGGYIWELMELTHCFQTNGLIDDNCEITFSKRLSDSELAKYSNQLSTLLGLN.

The protein belongs to the pneumovirus non-structural protein 1 family. Monomer. Homomultimer. Heteromultimer with NS2. Interacts with the matrix protein M. Interacts with host ELOC and CUL2; this interaction allows NS1 to form an active E3 ligase with ELOC and CUL2. Interacts with host IRF3; this interaction leads to the disrupted association of IRF3 with CREBBP and thus reduced binding of IRF3 to the IFN-beta promoter. Interacts with host MAVS; this interaction prevents MAVS binding to RIGI and inhibits signaling pathway leading to interferon production. Interacts with host TRIM25 (via SPRY domain); this interaction suppresses RIGI ubiquitination and results in decreased interaction between RIGI and MAVS.

The protein resides in the host cytoplasm. The protein localises to the host mitochondrion. It localises to the host nucleus. Functionally, plays a major role in antagonizing the type I IFN-mediated antiviral response by degrading or inhibiting multiple cellular factors required for either IFN induction or response pathways. Acts cooperatively with NS2 to repress activation and nuclear translocation of host IFN-regulatory factor IRF3. Also disrupts the association of IRF3 with CREBBP. Interacts with host mitochondrial-associated membrane (MAM) MAVS and prevents the interaction with RIGI. Interacts with TRIM25 to suppress TRIM25-mediated RIGI ubiquitination and thereby RIGI-MAVS interaction. Together with NS2, participates in the proteasomal degradation of host STAT2, IRF3, IRF7, TBK1 and RIGI through a NS-degradasome involving CUL2 and Elongin-C. The degradasome requires an intact mitochondrial MAVS. Decreases the levels of host TRAF3 and IKBKE/IKK-epsilon. As functions other than disruptions of the type I IFN-mediated antiviral signaling pathways, induces host SOCS1 and SOCS3 expression. Suppresses premature apoptosis by an NF-kappa-B-dependent, interferon-independent mechanism and thus facilitates virus growth. Additionally, NS1 may serve some inhibitory role in viral transcription and RNA replication. Suppresses proliferation and activation of host CD103+ CD8+ cytotoxic T-lymphocytes and Th17 helper T-lymphocytes. This chain is Non-structural protein 1 (1C), found in Bos taurus (Bovine).